Reading from the N-terminus, the 586-residue chain is MASTYNSFNLHTTAEKFYIEACDDGVGDVLAIDRVSTEKTLTVRKDVPPSAVTRPICGIMGTIRLVAGVYLIVITKKKKVGDLLGHAVWKASDFDIISYKKTVLHLTDNQMQDNKVFLSMLNSVLNTDGFYFATDYDLTHTLQRLSNTSPEFQEMTLLERADQRFVWNGHLLREFMAQPELHRFVFPVIHGFIAMRSCCINGKIFDWNLISRRSCFRAGVRYYVRGIDSEGHAANFVETEQIIQYNGAKASFIQTRGSIPFYWSQRPNLKYKPKPQISKSINHLDGFQRHFDSQIIIYGKQVILNLVNQKGSEKPLEQAFAKMVGSLGNGMIKYIAFDFHKECSRMRWHRLQILVDTVAELQDEFGYFLVDSDGSVQMQQDGTFRSNCMDCLDRTNVVQSLLARRSLQSQLERMAVLHVGQRIEEQADFEKIYKNAWADNANACAKQYAGTGALKTDFTRTGKRTQWGLLMDGWNSMIRYYKNNFSDGFRQDSIDLFLGNYAVEEADMNTPLHEPKDWKFLTLPIIMVVAFSMCIICLLMAGDTWTETLAYVLFWGSASVVTGGVILFNGRDFVDAPRLVQKEKMD.

The Cytoplasmic segment spans residues 1–519 (MASTYNSFNL…TPLHEPKDWK (519 aa)). The SAC domain occupies 121–450 (LNSVLNTDGF…ANACAKQYAG (330 aa)). Residues 451–586 (TGALKTDFTR…PRLVQKEKMD (136 aa)) are essential for phosphatidylinositol-4-phosphate phosphatase activity. The chain crosses the membrane as a helical span at residues 520–540 (FLTLPIIMVVAFSMCIICLLM). Topologically, residues 541-547 (AGDTWTE) are lumenal. The chain crosses the membrane as a helical span at residues 548-568 (TLAYVLFWGSASVVTGGVILF). Residues 569 to 586 (NGRDFVDAPRLVQKEKMD) lie on the Cytoplasmic side of the membrane.

The protein resides in the endoplasmic reticulum membrane. Its subcellular location is the golgi apparatus membrane. It carries out the reaction a 1,2-diacyl-sn-glycero-3-phospho-(1D-myo-inositol-3-phosphate) + H2O = a 1,2-diacyl-sn-glycero-3-phospho-(1D-myo-inositol) + phosphate. The enzyme catalyses a 1,2-diacyl-sn-glycero-3-phospho-(1D-myo-inositol 4-phosphate) + H2O = a 1,2-diacyl-sn-glycero-3-phospho-(1D-myo-inositol) + phosphate. Its function is as follows. Phosphoinositide phosphatase which catalyzes the hydrolysis of phosphatidylinositol 4-phosphate (PtdIns(4)P), phosphatidylinositol 3-phosphate (PtdIns(3)P) and has low activity towards phosphatidylinositol-3,5-bisphosphate (PtdIns(3,5)P2). The protein is Phosphatidylinositol-3-phosphatase SAC1-B (sacm1lb) of Danio rerio (Zebrafish).